Here is a 309-residue protein sequence, read N- to C-terminus: Olfactory receptor 1A2 (309 aa).

The Extracellular segment spans residues 1–25 (MKKENQSFNLDFILLGVTSQQEQNN). N-linked (GlcNAc...) asparagine glycosylation occurs at Asn-5. The helical transmembrane segment at 26–49 (VFFVIFLCIYPITLTGNLLIILAI) threads the bilayer. Topologically, residues 50-57 (CADIRLHN) are cytoplasmic. The chain crosses the membrane as a helical span at residues 58–79 (PMYFLLANLSLVDIIFSSVTIP). Residues 80–100 (KVLANHLLGSKFISFGGCLMQ) lie on the Extracellular side of the membrane. A disulfide bridge connects residues Cys-97 and Cys-189. A helical membrane pass occupies residues 101–120 (MYFMIALAKADSYTLAAMAY). At 121-139 (DRAVAISCPLHYTTIMSPR) the chain is on the cytoplasmic side. A helical membrane pass occupies residues 140 to 158 (SCILLIAGSWVIGNTSALP). Residues 159–195 (HTLLTASLSFCGNQEVANFYCDIMPLLKLSCSDVHFN) are Extracellular-facing. Residues 196 to 218 (VKMMYLGVGVFSLPLLCIIVSYV) form a helical membrane-spanning segment. Over 219–235 (QVFSTVFQVPSTKSLFK) the chain is Cytoplasmic. The helical transmembrane segment at 236–258 (AFCTCGSHLTVVFLYYGTTMGMY) threads the bilayer. Topologically, residues 259-270 (FRPLTSYSPKDA) are extracellular. The helical transmembrane segment at 271–290 (VITVMYVAVTPALNPFIYSL) threads the bilayer. Residues 291-309 (RNWDMKAALQKLFSKRISS) lie on the Cytoplasmic side of the membrane.

The protein belongs to the G-protein coupled receptor 1 family.

Its subcellular location is the cell membrane. In terms of biological role, odorant receptor. The sequence is that of Olfactory receptor 1A2 (OR1A2) from Homo sapiens (Human).